We begin with the raw amino-acid sequence, 286 residues long: 33 kDa chaperonin (286 aa).

Cystine bridges form between C225-C227 and C258-C261.

It belongs to the HSP33 family. Under oxidizing conditions two disulfide bonds are formed involving the reactive cysteines. Under reducing conditions zinc is bound to the reactive cysteines and the protein is inactive.

It is found in the cytoplasm. Its function is as follows. Redox regulated molecular chaperone. Protects both thermally unfolding and oxidatively damaged proteins from irreversible aggregation. Plays an important role in the bacterial defense system toward oxidative stress. In Shewanella woodyi (strain ATCC 51908 / MS32), this protein is 33 kDa chaperonin.